The chain runs to 203 residues: ATP-dependent Clp protease proteolytic subunit (203 aa).

Ser98 acts as the Nucleophile in catalysis. His123 is an active-site residue.

Belongs to the peptidase S14 family. In terms of assembly, fourteen ClpP subunits assemble into 2 heptameric rings which stack back to back to give a disk-like structure with a central cavity, resembling the structure of eukaryotic proteasomes.

Its subcellular location is the cytoplasm. The catalysed reaction is Hydrolysis of proteins to small peptides in the presence of ATP and magnesium. alpha-casein is the usual test substrate. In the absence of ATP, only oligopeptides shorter than five residues are hydrolyzed (such as succinyl-Leu-Tyr-|-NHMec, and Leu-Tyr-Leu-|-Tyr-Trp, in which cleavage of the -Tyr-|-Leu- and -Tyr-|-Trp bonds also occurs).. Cleaves peptides in various proteins in a process that requires ATP hydrolysis. Has a chymotrypsin-like activity. Plays a major role in the degradation of misfolded proteins. The chain is ATP-dependent Clp protease proteolytic subunit from Desulfotalea psychrophila (strain LSv54 / DSM 12343).